A 237-amino-acid polypeptide reads, in one-letter code: Uridylate kinase (237 aa).

Lysine 10–glycine 13 contributes to the ATP binding site. Residues glycine 18–glycine 23 form an involved in allosteric activation by GTP region. Glycine 52 is a UMP binding site. ATP contacts are provided by glycine 53 and arginine 57. Residues aspartate 73 and threonine 134 to threonine 141 contribute to the UMP site. 3 residues coordinate ATP: threonine 161, tyrosine 167, and aspartate 170.

The protein belongs to the UMP kinase family. In terms of assembly, homohexamer.

It localises to the cytoplasm. The catalysed reaction is UMP + ATP = UDP + ADP. Its pathway is pyrimidine metabolism; CTP biosynthesis via de novo pathway; UDP from UMP (UMPK route): step 1/1. Its activity is regulated as follows. Allosterically activated by GTP. Inhibited by UTP. In terms of biological role, catalyzes the reversible phosphorylation of UMP to UDP. This Campylobacter hominis (strain ATCC BAA-381 / DSM 21671 / CCUG 45161 / LMG 19568 / NCTC 13146 / CH001A) protein is Uridylate kinase.